A 322-amino-acid polypeptide reads, in one-letter code: Germ cell-specific gene 1-like protein (322 aa).

The Cytoplasmic segment spans residues 1 to 8 (MKTSRRGR). The helical transmembrane segment at 9 to 29 (ALLAVALNLLALLFATTAFLT) threads the bilayer. Topologically, residues 30–122 (TYWCQGTQRV…FIDLAPASEK (93 aa)) are extracellular. A helical transmembrane segment spans residues 123 to 143 (GVLWLSVVSEVLYILLLVVGF). Residues 144-163 (SLMCLELVHSSSVIDGLKLN) are Cytoplasmic-facing. The helical transmembrane segment at 164-184 (AFAAVFTVLSGLLGMVAHMMY) threads the bilayer. The Extracellular portion of the chain corresponds to 185–207 (TQVFQVTVSLGPEDWRPHSWDYG). Residues 208 to 228 (WSFCLAWGSFTCCMAASVTTL) form a helical membrane-spanning segment. At 229-322 (NSYTKTVIEF…RQCWVLGHWV (94 aa)) the chain is on the cytoplasmic side. Ser274 carries the phosphoserine modification.

Belongs to the GSG1 family. Component of the inner core of AMPAR complexes. AMPAR complexes consist of an inner core made of 4 pore-forming GluA/GRIA proteins (GRIA1, GRIA2, GRIA3 and GRIA4) and 4 major auxiliary subunits arranged in a twofold symmetry. One of the two pairs of distinct binding sites is occupied either by CNIH2, CNIH3 or CACNG2, CACNG3. The other harbors CACNG2, CACNG3, CACNG4, CACNG8 or GSG1L. This inner core of AMPAR complexes is complemented by outer core constituents binding directly to the GluA/GRIA proteins at sites distinct from the interaction sites of the inner core constituents. Outer core constituents include at least PRRT1, PRRT2, CKAMP44/SHISA9, FRRS1L and NRN1. The proteins of the inner and outer core serve as a platform for other, more peripherally associated AMPAR constituents. Alone or in combination, these auxiliary subunits control the gating and pharmacology of the AMPAR complexes and profoundly impact their biogenesis and protein processing. In terms of tissue distribution, expressed in the brain, including hippocampus (at protein level).

It is found in the cell membrane. The protein localises to the synapse. In terms of biological role, as a component of the inner core of AMPAR complexes, modifies AMPA receptor (AMPAR) gating. The protein is Germ cell-specific gene 1-like protein (Gsg1l) of Mus musculus (Mouse).